Consider the following 880-residue polypeptide: MADTTVEKLATEVGKSVERLIEQFSQAGIKKGQADNVSEAEKQQLLDYLKKQHGADSAPTKMTLQRKTVSTLSVAGNGGQSKDVKVEVRKTRTFVKRDVNDTVLKAEEEAKAEAEALAKAKAEAEAAQAAKAKAEAEAKAKAEAEAKAKAKAAAEVKVTKESSPEVEAARLEAERLKAAQEAATKRKQDEEAAKAAEKARLLAEENSKRWAEEERQRLEAERNGDHHITTSKVARAAEDTSDLDEEKRGRRARNKSNAKKRGGKDARDGREKHMRNRSTAPESMAHGFNKPVAAVSRDVRIGETVTVSELAHLMAVKATEIIKQMMKMGSMVTINQVLDQETAQLVAEEMGHKVVLIRENELEHQVLQDRDDEDGIKLESRAPVVTIMGHVDHGKTSLLDYIRRAKVAAGEAGGITQHIGAYHVETENGMITFLDTPGHAAFTAMRARGAKATDIVVLVVAADDGVMPQTIEAIQHAKAGNVPLIVAVNKMDKPEADIDRVKSELSQHGVMSEDWGGDNMFAFVSAKTGEGVDDLLEGILLQAEVLELKAVRDGMAAGVVIESQLDKGRGPVATILVQEGTLRQGDIVLCGLEYGKIRAMKDENGRSITEAGPSIPVEILGLSGVPSAGDEATVVRDERKAREVALYRQGKFRDVKLARQQKSKLENMFANMTDGEVKELNIVLKADVQGSLEAITDSLTGLSTDEVKVNIIARGVGALTETDATLAAASNAIMVGFNVRADAQARKVIESESVDLRYYSVIYNLIDEVKAAMTGMLSPEFKQQIIGLAEVRDVFKSPKLGAIAGCMVTEGTIKRSAPIRVLRDNVVIFEGELESLRRFKDDVAEVRNGMECGIGVKNYNDVRVGDQIEVFETVEVARTL.

The segment covering 143–228 (EAEAKAKAKA…EAERNGDHHI (86 aa)) has biased composition (basic and acidic residues). The disordered stretch occupies residues 143 to 289 (EAEAKAKAKA…APESMAHGFN (147 aa)). A compositionally biased stretch (basic residues) spans 249–262 (GRRARNKSNAKKRG). Residues 380-549 (SRAPVVTIMG…LLQAEVLELK (170 aa)) enclose the tr-type G domain. Residues 389 to 396 (GHVDHGKT) form a G1 region. 389–396 (GHVDHGKT) is a GTP binding site. Positions 414–418 (GITQH) are G2. Positions 435–438 (DTPG) are G3. Residues 435–439 (DTPGH) and 489–492 (NKMD) each bind GTP. The segment at 489–492 (NKMD) is G4. Residues 525-527 (SAK) form a G5 region.

It belongs to the TRAFAC class translation factor GTPase superfamily. Classic translation factor GTPase family. IF-2 subfamily.

Its subcellular location is the cytoplasm. In terms of biological role, one of the essential components for the initiation of protein synthesis. Protects formylmethionyl-tRNA from spontaneous hydrolysis and promotes its binding to the 30S ribosomal subunits. Also involved in the hydrolysis of GTP during the formation of the 70S ribosomal complex. This Shewanella putrefaciens (strain CN-32 / ATCC BAA-453) protein is Translation initiation factor IF-2.